Consider the following 448-residue polypeptide: Signal recognition particle 54 kDa protein (448 aa).

Residues 107-114 (GIQGSGKT), 189-193 (DSAGR), and 247-250 (TKLD) contribute to the GTP site.

It belongs to the GTP-binding SRP family. SRP54 subfamily. As to quaternary structure, part of the signal recognition particle protein translocation system, which is composed of SRP and FtsY. Archaeal SRP consists of a 7S RNA molecule of 300 nucleotides and two protein subunits: SRP54 and SRP19.

It localises to the cytoplasm. It catalyses the reaction GTP + H2O = GDP + phosphate + H(+). Its function is as follows. Involved in targeting and insertion of nascent membrane proteins into the cytoplasmic membrane. Binds to the hydrophobic signal sequence of the ribosome-nascent chain (RNC) as it emerges from the ribosomes. The SRP-RNC complex is then targeted to the cytoplasmic membrane where it interacts with the SRP receptor FtsY. This Thermococcus onnurineus (strain NA1) protein is Signal recognition particle 54 kDa protein.